The chain runs to 439 residues: Diaminopimelate decarboxylase (439 aa).

K66 is subject to N6-(pyridoxal phosphate)lysine. Residues G248 and 290-293 (EPGR) each bind pyridoxal 5'-phosphate. The substrate site is built by R293, R330, and Y334. C361 serves as the catalytic Proton donor. Substrate is bound by residues E362 and Y390. Y390 contributes to the pyridoxal 5'-phosphate binding site.

This sequence belongs to the Orn/Lys/Arg decarboxylase class-II family. LysA subfamily. In terms of assembly, homodimer. Requires pyridoxal 5'-phosphate as cofactor.

It carries out the reaction meso-2,6-diaminopimelate + H(+) = L-lysine + CO2. It functions in the pathway amino-acid biosynthesis; L-lysine biosynthesis via DAP pathway; L-lysine from DL-2,6-diaminopimelate: step 1/1. Its function is as follows. Specifically catalyzes the decarboxylation of meso-diaminopimelate (meso-DAP) to L-lysine. In Bacillus subtilis (strain 168), this protein is Diaminopimelate decarboxylase.